Reading from the N-terminus, the 348-residue chain is Probable dual-specificity RNA methyltransferase RlmN (348 aa).

The Proton acceptor role is filled by Glu92. The Radical SAM core domain maps to 98 to 331 (HPDRVTACIS…NEIRREKGTD (234 aa)). The cysteines at positions 105 and 336 are disulfide-linked. [4Fe-4S] cluster-binding residues include Cys112, Cys116, and Cys119. S-adenosyl-L-methionine-binding positions include 159–160 (GE), Ser191, 214–216 (SLH), and Asn290. The S-methylcysteine intermediate role is filled by Cys336.

This sequence belongs to the radical SAM superfamily. RlmN family. It depends on [4Fe-4S] cluster as a cofactor.

The protein localises to the cytoplasm. The catalysed reaction is adenosine(2503) in 23S rRNA + 2 reduced [2Fe-2S]-[ferredoxin] + 2 S-adenosyl-L-methionine = 2-methyladenosine(2503) in 23S rRNA + 5'-deoxyadenosine + L-methionine + 2 oxidized [2Fe-2S]-[ferredoxin] + S-adenosyl-L-homocysteine. It catalyses the reaction adenosine(37) in tRNA + 2 reduced [2Fe-2S]-[ferredoxin] + 2 S-adenosyl-L-methionine = 2-methyladenosine(37) in tRNA + 5'-deoxyadenosine + L-methionine + 2 oxidized [2Fe-2S]-[ferredoxin] + S-adenosyl-L-homocysteine. Specifically methylates position 2 of adenine 2503 in 23S rRNA and position 2 of adenine 37 in tRNAs. In Fervidobacterium nodosum (strain ATCC 35602 / DSM 5306 / Rt17-B1), this protein is Probable dual-specificity RNA methyltransferase RlmN.